The following is a 353-amino-acid chain: MKATRSAPRERERSRTTSGSDQVHSWILVPSQVLHAVWRIARASVMTALSLLSATLSYFRSLYLYLGHQLKWWIGYLQRKFKRNLSVEAEVDLLSYCAREWKGETPRARLMRKAYEELFWRYHVKCVRPVKRDNYDALRSVLFQIFSQGLSFPSWMKEKDIVKLPEKLLFSQGCNWIQQYSFGPEKYTGSNVFGKLRKCVELLKLQWTEFSGMRDYHKRGSMCNSLFSDAILECKLYEALKFLMLYQVTEVYEQMKTNKIVPSLFRLLFSRESSPDPLSFMMNHLNSIGDTCGLDQIDMFILGYSLQVKIKVFRLFKFNSRDFAVYYPEEPLREWPEISLLTENDHQYHIPVF.

The segment at 1–80 (MKATRSAPRE…KWWIGYLQRK (80 aa)) is required for membrane binding. Positions 125–353 (KCVRPVKRDN…NDHQYHIPVF (229 aa)) constitute an OTU domain.

The protein belongs to the peptidase C65 family. Otulin subfamily. Does not bind ubiquitin or ubiquitin-like proteins.

It localises to the cytoplasm. Its subcellular location is the endoplasmic reticulum membrane. The protein resides in the nucleus envelope. Functionally, lacks deubiquitinase activity. The protein is Inactive ubiquitin thioesterase OTULINL of Rattus norvegicus (Rat).